Reading from the N-terminus, the 94-residue chain is Progonadoliberin-1 (94 aa).

Positions 1–22 (MAAKILALWLLLAGTVFPQGCC) are cleaved as a signal peptide. Gln23 carries the pyrrolidone carboxylic acid modification. At Gly32 the chain carries Glycine amide.

The protein belongs to the GnRH family. As to expression, synthesized in preoptic neurons and is transported to the pituitary in the preoptic-hypophyseal axons.

Its subcellular location is the secreted. In terms of biological role, stimulates the secretion of gonadotropins. May be responsible for the regulation of the hypothalamic-pituitary-gonadal axis. The sequence is that of Progonadoliberin-1 (gnrh1) from Haplochromis burtoni (Burton's mouthbrooder).